We begin with the raw amino-acid sequence, 494 residues long: 5'-3' exonuclease PLD3 (494 aa).

The Cytoplasmic portion of the chain corresponds to 1-37; it reads MNPKVEYKQIQSHDEAENQVLQHECHQAKARKYYRCA. The chain crosses the membrane as a helical; Signal-anchor for type II membrane protein span at residues 38 to 58; it reads VVIAIIITLLFCVLASQLLLF. At 59 to 494 the chain is on the lumenal side; sequence PLFSITSQTT…LSSWKEKCIF (436 aa). N-linked (GlcNAc...) asparagine glycosylation occurs at Asn100. Residues 198–225 enclose the PLD phosphodiesterase 1 domain; the sequence is TDGVLHTKFWVVDSEHFYIGSANMDWRS. Residues His203, Lys205, and Asp210 contribute to the active site. N-linked (GlcNAc...) asparagine glycans are attached at residues Asn238, Asn260, Asn270, Asn286, and Asn389. Residues 413 to 439 enclose the PLD phosphodiesterase 2 domain; the sequence is YARVNHNKYMVTDRVAYIGTSNWSGDY. Catalysis depends on residues His418, Lys420, and Asp425. 3 N-linked (GlcNAc...) asparagine glycosylation sites follow: Asn434, Asn451, and Asn477.

The protein belongs to the phospholipase D family. In terms of processing, N-glycosylated. Post-translationally, proteolytically processed to a soluble form that is stable within endosomes and lysosomes. During transport through the secretory pathway becomes proteolysed by cysteine proteases, thereby releasing a stable soluble lysosomal lumenal polypeptide, whereas the transmembrane-bound fragment is rapidly degraded. Its transport route to lysosomes involves ubiquitination and the ESCRT complex. Ubiquitinated. Ubiquitination mediates sorting into lysosomes.

The protein localises to the endoplasmic reticulum membrane. It is found in the lysosome lumen. Its subcellular location is the early endosome membrane. The protein resides in the late endosome membrane. It localises to the golgi apparatus membrane. The protein localises to the endosome membrane. It carries out the reaction Exonucleolytic cleavage in the 5'- to 3'-direction to yield nucleoside 3'-phosphates.. Its function is as follows. 5'-&gt;3' DNA exonuclease which digests single-stranded DNA (ssDNA). Regulates inflammatory cytokine responses via the degradation of nucleic acids, by reducing the concentration of ssDNA able to stimulate TLR9, a nucleotide-sensing receptor in collaboration with PLD4. May be important in myotube formation. Plays a role in lysosomal homeostasis. Involved in the regulation of endosomal protein sorting. The chain is 5'-3' exonuclease PLD3 (pld3) from Xenopus tropicalis (Western clawed frog).